The sequence spans 259 residues: Adenosylcobinamide-GDP ribazoletransferase (259 aa).

The next 6 helical transmembrane spans lie at 37 to 57 (ASRY…LVYS), 58 to 78 (VMLH…ASVL), 118 to 138 (ALAL…LALF), 143 to 163 (VSLA…SFIF), 195 to 215 (AAIS…LGLL), and 237 to 257 (LGAT…IVGA).

It belongs to the CobS family. It depends on Mg(2+) as a cofactor.

Its subcellular location is the cell inner membrane. It catalyses the reaction alpha-ribazole + adenosylcob(III)inamide-GDP = adenosylcob(III)alamin + GMP + H(+). The catalysed reaction is alpha-ribazole 5'-phosphate + adenosylcob(III)inamide-GDP = adenosylcob(III)alamin 5'-phosphate + GMP + H(+). Its pathway is cofactor biosynthesis; adenosylcobalamin biosynthesis; adenosylcobalamin from cob(II)yrinate a,c-diamide: step 7/7. Functionally, joins adenosylcobinamide-GDP and alpha-ribazole to generate adenosylcobalamin (Ado-cobalamin). Also synthesizes adenosylcobalamin 5'-phosphate from adenosylcobinamide-GDP and alpha-ribazole 5'-phosphate. The chain is Adenosylcobinamide-GDP ribazoletransferase from Shewanella piezotolerans (strain WP3 / JCM 13877).